The chain runs to 256 residues: Small ribosomal subunit protein eS1 (256 aa).

Residue Ala2 is modified to N-acetylalanine; partial.

The protein belongs to the eukaryotic ribosomal protein eS1 family. In terms of assembly, component of the small ribosomal subunit. Mature ribosomes consist of a small (40S) and a large (60S) subunit. The 40S subunit contains about 33 different proteins and 1 molecule of RNA (18S). The 60S subunit contains about 49 different proteins and 3 molecules of RNA (25S, 5.8S and 5S).

It localises to the cytoplasm. The protein is Small ribosomal subunit protein eS1 of Postia placenta (strain ATCC 44394 / Madison 698-R) (Brown rot fungus).